The following is a 504-amino-acid chain: MFGDRQRPMVLVLGLGESGLAIARWCARHGCRLRVADTRETPPNLAALTAAGVDFEFVGGAFSPALVDGGIELVALSPGLSPLAEDLAPLVAAARERGIPVWGELEFFAQALAALGANGYAPKVIAITGTNGKTTTTSLAGLLCERAGKKVAVAGNISPAMLDKLTEAIDAAALPDVWVLELSSFQLDTAHTFAPDAATILNITQDHLDWHGGFAAYAAAKGRVFGPRTVRVLNRDDAEVMRFAPPAAAADAPRAVTFGLNEPAADGDYGLLRENGIAWLVEAIDRDAADAPAAPSRRRKQEAANPPDIALKRLMPADALRIRGLHNAANALAAYALARAIGLPAAPLLHGLREYRGEPHRVEVIATLDGVDYVDDSKGTNVGATVAALDGLAQRAVLIAGGDGKGQDFEPLAAPVARWCRAVMLIGRDAPALREALADTGVPLADHATLEAAVRAASALAQPGDAVLLSPACASLDMFRNYAHRADVFRSAVEDIALEKGTTL.

129 to 135 contributes to the ATP binding site; sequence GTNGKTT.

Belongs to the MurCDEF family.

Its subcellular location is the cytoplasm. The enzyme catalyses UDP-N-acetyl-alpha-D-muramoyl-L-alanine + D-glutamate + ATP = UDP-N-acetyl-alpha-D-muramoyl-L-alanyl-D-glutamate + ADP + phosphate + H(+). It functions in the pathway cell wall biogenesis; peptidoglycan biosynthesis. Functionally, cell wall formation. Catalyzes the addition of glutamate to the nucleotide precursor UDP-N-acetylmuramoyl-L-alanine (UMA). The sequence is that of UDP-N-acetylmuramoylalanine--D-glutamate ligase from Burkholderia pseudomallei (strain 668).